The primary structure comprises 1977 residues: Echinoderm microtubule-associated protein-like 5 (1977 aa).

WD repeat units follow at residues 59-100, 104-145, 148-187, 195-233, 235-273, 280-321, 323-362, 364-403, 406-445, 449-488, and 561-601; these read GHSD…TVSV, VHTH…MLSM, GHTDRIFDISWDLYQPNKLVSCGVKHIKFWSLCGNALTPK, GDLQTILCLACARDELTYSGALNGDIYVWKGINLIRTIQ, AHTAGIFSMNACEEGFATGGRDGCIRLWDLTFKPITVID, GYKG…LIMQ, HCEGELWALAVHPTKPLAVTGSDDRSVRIWSLVDHALIAR, NMDEPIRCAAVNADGVHLALGMKDGSLTVLRVRDMTEVVH, DRKEAIHELKYSPDGTYLAVGCNDSSVDIYGVAQRYKKVG, GSLSFITHLDWSSDSKYLQTNDGSGKRLLYKMPGGKEVTS, and GHSA…KLKD. The tract at residues 609-629 is disordered; it reads ESLTESNSDESDSDLSDVPEL. Residues 615 to 629 are compositionally biased toward acidic residues; the sequence is NSDESDSDLSDVPEL. WD repeat units lie at residues 725–766, 770–811, 814–853, 861–900, 901–940, 996–1035, 1038–1077, 1080–1120, and 1236–1276; these read GHDD…PLSI, YHQY…KLSV, GSKDKIFVVKMNPYVPDKLITAGIKHMKFWRRAGGGLIGR, GKNDTMMCAVYGWTEEMAFSGTSTGDVCIWRDVFLVKTVK, AHDGPVFSMHALEKGFVTGGKDGVVALWDDSFERCLKTYA, HMEGEVWGLATHPYLPICATVSDDKTLRIWDLSPSHCMLA, KLKKGGRCCCFSPDGKALAVGLNDGSFLMANADTLEDLVS, HRKD…RVGV, and AHST…HREK. 2 disordered regions span residues 1274–1299 and 1323–1363; these read REKKNCDSEESDTDSEEDGGYDSDVT and PHLQ…NVGK. Positions 1281 to 1294 are enriched in acidic residues; that stretch reads SEESDTDSEEDGGY. Residues 1326–1337 are compositionally biased toward basic and acidic residues; sequence QQKEPSVDERQG. WD repeat units lie at residues 1420 to 1471, 1475 to 1516, 1519 to 1558, 1568 to 1606, 1608 to 1654, 1699 to 1739, 1741 to 1782, 1783 to 1822, 1895 to 1934, and 1940 to 1977; these read EHND…TLSI, SHSK…KIAS, GHNQRIFVAEFRPDSDTQFVSVGIKHVKFWTLAGRALLSK, ARMQTMLAVAFGANNLTFTGTISGDVCVWKDHILCRVVA, AHNG…RAFR, GHVD…MLNK, NLGH…GKKR, DRRCAIHDIRFSPDSRYLAVGSSENSVDFYDLTLGPTLNR, AEKADVTCACVSHSGISLVTGDDFGMVKLYDFPCPEKFAK, and GHSPHVTNIRFTSGDRHVVSAGGDDCSVFVWKCVHTPH.

This sequence belongs to the WD repeat EMAP family. Highly expressed in brain, especially in hippocampus, cerebellum and olfactory bulb (at protein level).

It is found in the cytoplasm. The protein resides in the cytoskeleton. In terms of biological role, may modify the assembly dynamics of microtubules, such that microtubules are slightly longer, but more dynamic. This chain is Echinoderm microtubule-associated protein-like 5 (Eml5), found in Rattus norvegicus (Rat).